A 349-amino-acid chain; its full sequence is UPF0284 protein MA_3887 (349 aa).

It belongs to the UPF0284 family.

This is UPF0284 protein MA_3887 from Methanosarcina acetivorans (strain ATCC 35395 / DSM 2834 / JCM 12185 / C2A).